Consider the following 216-residue polypeptide: Pyridoxine/pyridoxamine 5'-phosphate oxidase (216 aa).

Residues 9-12 and Arg67 each bind substrate; that span reads RLSY. FMN is bound by residues 62–67, 77–78, Lys84, and Gln106; these read RIVLLR and YT. Positions 124, 128, and 132 each coordinate substrate. FMN-binding positions include 142–143 and Trp188; that span reads QS. 194–196 is a substrate binding site; that stretch reads RMH. Arg198 is an FMN binding site.

It belongs to the pyridoxamine 5'-phosphate oxidase family. Homodimer. FMN is required as a cofactor.

It carries out the reaction pyridoxamine 5'-phosphate + O2 + H2O = pyridoxal 5'-phosphate + H2O2 + NH4(+). It catalyses the reaction pyridoxine 5'-phosphate + O2 = pyridoxal 5'-phosphate + H2O2. It functions in the pathway cofactor metabolism; pyridoxal 5'-phosphate salvage; pyridoxal 5'-phosphate from pyridoxamine 5'-phosphate: step 1/1. The protein operates within cofactor metabolism; pyridoxal 5'-phosphate salvage; pyridoxal 5'-phosphate from pyridoxine 5'-phosphate: step 1/1. Catalyzes the oxidation of either pyridoxine 5'-phosphate (PNP) or pyridoxamine 5'-phosphate (PMP) into pyridoxal 5'-phosphate (PLP). This Psychrobacter cryohalolentis (strain ATCC BAA-1226 / DSM 17306 / VKM B-2378 / K5) protein is Pyridoxine/pyridoxamine 5'-phosphate oxidase.